We begin with the raw amino-acid sequence, 110 residues long: UPF0060 membrane protein Bamb_1160 (110 aa).

4 consecutive transmembrane segments (helical) span residues 9–29 (ALFAVTALAEIVGCYLPWLVL), 34–54 (PVWLLVPAALSLALFAWLLTL), 66–86 (YGGVYIAVALIWLRVVDGVAL), and 88–108 (RWDAAGAVLALGGMAVIALQP).

It belongs to the UPF0060 family.

The protein localises to the cell inner membrane. This Burkholderia ambifaria (strain ATCC BAA-244 / DSM 16087 / CCUG 44356 / LMG 19182 / AMMD) (Burkholderia cepacia (strain AMMD)) protein is UPF0060 membrane protein Bamb_1160.